A 415-amino-acid chain; its full sequence is Histidine--tRNA ligase (415 aa).

It belongs to the class-II aminoacyl-tRNA synthetase family. As to quaternary structure, homodimer.

Its subcellular location is the cytoplasm. The enzyme catalyses tRNA(His) + L-histidine + ATP = L-histidyl-tRNA(His) + AMP + diphosphate + H(+). This is Histidine--tRNA ligase from Clostridium botulinum (strain Okra / Type B1).